The following is an 87-amino-acid chain: uncharacterized protein (87 aa).

This is an uncharacterized protein from Enterobacteria phage T4 (Bacteriophage T4).